We begin with the raw amino-acid sequence, 497 residues long: Latent membrane protein 2 (497 aa).

The segment at 1 to 108 (MGSLEMVPMG…PPYSPRDDSS (108 aa)) is disordered. Topologically, residues 1 to 123 (MGSLEMVPMG…EAGRGSMNPV (123 aa)) are cytoplasmic. Residues 27-41 (NNSQYPSASGSSGNT) show a composition bias toward polar residues. A PPxY motif motif is present at residues 97–101 (PPPPY). Position 112 is a phosphotyrosine; by host (Tyr112). Residues 124-144 (CLPVIVAPYLFWLAAIAASCF) form a helical membrane-spanning segment. At 145–147 (TAS) the chain is on the extracellular side. The helical transmembrane segment at 148–168 (VSTVVTATGLALSLLLLAAVA) threads the bilayer. Over 169-177 (SSYAAAQRK) the chain is Cytoplasmic. Residues 178–198 (LLTPVTVLTAVVTFFAICLTW) form a helical membrane-spanning segment. At 199–211 (RIEDPPFNSLLFA) the chain is on the extracellular side. A helical transmembrane segment spans residues 212–232 (LLAAAGGLQGIYVLVMLVLLI). At 233–241 (LAYRRRWRR) the chain is on the cytoplasmic side. Residues 242–262 (LTVCGGIMFLACVLVLIVDAV) traverse the membrane as a helical segment. Topologically, residues 263–267 (LQLSP) are extracellular. A helical membrane pass occupies residues 268–288 (LLGAVTVVSMTLLLLAFVLWL). The Cytoplasmic portion of the chain corresponds to 289-296 (SSPGGLGT). Residues 297–317 (LGAALLTLAAALALLASLILG) form a helical membrane-spanning segment. Residue Thr318 is a topological domain, extracellular. Residues 319–339 (LNLTTMFLLMLLWTLVVLLIC) form a helical membrane-spanning segment. Over 340–354 (SSCSSCPLSKILLAR) the chain is Cytoplasmic. Residues 355 to 375 (LFLYALALLLLASALIAGGSI) traverse the membrane as a helical segment. The Extracellular portion of the chain corresponds to 376–388 (LQTNFKSLSSTEF). A helical transmembrane segment spans residues 389–409 (IPNLFCMLLLIVAGILFILAI). At 410-422 (LTEWGSGNRTYGP) the chain is on the cytoplasmic side. Residues 423 to 443 (VFMCLGGLLTMVAGAVWLTVM) traverse the membrane as a helical segment. At 444 to 449 (TNTLLS) the chain is on the extracellular side. Residues 450-470 (AWILTAGFLIFLIGFALFGVI) traverse the membrane as a helical segment. At 471–497 (RCCRYCCYYCLTLESEERPPTPYRNTV) the chain is on the cytoplasmic side.

It belongs to the herpesviridae LMP-2 family. The cytoplasmic N-terminal domain interacts with human SRC family protein tyrosine kinases SYK and LYN. Binds human ITCH, WWP2 and NEDD4L. Phosphorylated on cytoplasmic N-terminal tyrosine residues, possibly by human LYN. In terms of processing, can be ubiquitinated by human ITCH and WWP2 on the N-terminus in a lysine-independent manner.

The protein localises to the host cell membrane. Its subcellular location is the host endomembrane system. It localises to the host cytoplasm. It is found in the host perinuclear region. Its function is as follows. Maintains EBV latent infection of B-lymphocyte, by preventing lytic reactivation of the virus in response to surface immunoglobulin (sIg) cross-linking. Acts like a dominant negative inhibitor of the sIg-associated protein tyrosine kinases, LYN and SYK. Also blocks translocation of the B-cell antigen receptor (BCR) into lipid rafts, preventing the subsequent signaling and accelerated internalization of the BCR upon BCR cross-linking. Serves as a molecular scaffold to recruit SYK, LYN and E3 protein-ubiquitin ligases, such as ITCH and NEDD4L, leading to ubiquitination and potential degradation of both tyrosines kinases. Possesses a constitutive signaling activity in non-transformed cells, inducing bypass of normal B lymphocyte developmental checkpoints allowing immunoglobulin-negative cells to colonize peripheral lymphoid organs. May be a negative regulator of isoform LMP2A. The protein is Latent membrane protein 2 (LMP2) of Homo sapiens (Human).